A 334-amino-acid polypeptide reads, in one-letter code: Glyceraldehyde-3-phosphate dehydrogenase (334 aa).

NAD(+) is bound by residues 12-13 (RI), Asp34, and Arg79. Residues 150 to 152 (SCT), Thr181, 210 to 211 (TG), and Arg233 each bind D-glyceraldehyde 3-phosphate. The active-site Nucleophile is Cys151. Residue Asn315 participates in NAD(+) binding.

Belongs to the glyceraldehyde-3-phosphate dehydrogenase family. Homotetramer.

The protein resides in the cytoplasm. It catalyses the reaction D-glyceraldehyde 3-phosphate + phosphate + NAD(+) = (2R)-3-phospho-glyceroyl phosphate + NADH + H(+). The protein operates within carbohydrate degradation; glycolysis; pyruvate from D-glyceraldehyde 3-phosphate: step 1/5. This chain is Glyceraldehyde-3-phosphate dehydrogenase (GPD), found in Wickerhamomyces ciferrii (strain ATCC 14091 / BCRC 22168 / CBS 111 / JCM 3599 / NBRC 0793 / NRRL Y-1031 F-60-10) (Yeast).